Here is a 313-residue protein sequence, read N- to C-terminus: 4-hydroxy-3-methylbut-2-enyl diphosphate reductase (313 aa).

Position 20 (Cys-20) interacts with [4Fe-4S] cluster. (2E)-4-hydroxy-3-methylbut-2-enyl diphosphate-binding residues include His-49 and His-82. Dimethylallyl diphosphate-binding residues include His-49 and His-82. 2 residues coordinate isopentenyl diphosphate: His-49 and His-82. A [4Fe-4S] cluster-binding site is contributed by Cys-104. Position 132 (His-132) interacts with (2E)-4-hydroxy-3-methylbut-2-enyl diphosphate. His-132 serves as a coordination point for dimethylallyl diphosphate. His-132 is a binding site for isopentenyl diphosphate. Glu-134 serves as the catalytic Proton donor. Thr-172 is a (2E)-4-hydroxy-3-methylbut-2-enyl diphosphate binding site. [4Fe-4S] cluster is bound at residue Cys-201. (2E)-4-hydroxy-3-methylbut-2-enyl diphosphate-binding residues include Ser-229, Ser-230, Asn-231, and Ser-273. Dimethylallyl diphosphate-binding residues include Ser-229, Ser-230, Asn-231, and Ser-273. Residues Ser-229, Ser-230, Asn-231, and Ser-273 each contribute to the isopentenyl diphosphate site.

This sequence belongs to the IspH family. The cofactor is [4Fe-4S] cluster.

It catalyses the reaction isopentenyl diphosphate + 2 oxidized [2Fe-2S]-[ferredoxin] + H2O = (2E)-4-hydroxy-3-methylbut-2-enyl diphosphate + 2 reduced [2Fe-2S]-[ferredoxin] + 2 H(+). The enzyme catalyses dimethylallyl diphosphate + 2 oxidized [2Fe-2S]-[ferredoxin] + H2O = (2E)-4-hydroxy-3-methylbut-2-enyl diphosphate + 2 reduced [2Fe-2S]-[ferredoxin] + 2 H(+). Its pathway is isoprenoid biosynthesis; dimethylallyl diphosphate biosynthesis; dimethylallyl diphosphate from (2E)-4-hydroxy-3-methylbutenyl diphosphate: step 1/1. The protein operates within isoprenoid biosynthesis; isopentenyl diphosphate biosynthesis via DXP pathway; isopentenyl diphosphate from 1-deoxy-D-xylulose 5-phosphate: step 6/6. Catalyzes the conversion of 1-hydroxy-2-methyl-2-(E)-butenyl 4-diphosphate (HMBPP) into a mixture of isopentenyl diphosphate (IPP) and dimethylallyl diphosphate (DMAPP). Acts in the terminal step of the DOXP/MEP pathway for isoprenoid precursor biosynthesis. In Desulfotalea psychrophila (strain LSv54 / DSM 12343), this protein is 4-hydroxy-3-methylbut-2-enyl diphosphate reductase.